A 356-amino-acid polypeptide reads, in one-letter code: MLCLGIESSCDETGLALVRDGKLVAEKLASQVDVHAVFGGVVPEIASREHLRVLPVLLRELLKEQRLTIDDIDVVSVARGPGLQGCLLMGLSFAKGLVLSCGAKLVGVNHLWAHLTAAGLEQDLQFPSLGLLVSGGHTHIYLIESPLQFTLLGRTLDDAAGEAFDKTAKSLNLPYPGGKLVDDLGRQGVVNKKLFPVPYINNDNLDFSFSGLKTAVANYVNQNSNLRLDTMGIPEEGVEEPAISEERKNMLASFNYTVGRTLEVKVERALKRNRGVKSLIVAGGVAANSVVRSVMTDVAAKFSIPLVLPSMHLCTDNGAMIAYAGYLMASAGCRHDLDLDAIPRGRVIPSDWICEG.

His110 and His114 together coordinate Fe cation. Residues 132–136 (LVSGG), Asp165, Gly178, Asp182, and Asn288 contribute to the substrate site. A Fe cation-binding site is contributed by Asp316.

It belongs to the KAE1 / TsaD family. The cofactor is Fe(2+).

The protein localises to the cytoplasm. It carries out the reaction L-threonylcarbamoyladenylate + adenosine(37) in tRNA = N(6)-L-threonylcarbamoyladenosine(37) in tRNA + AMP + H(+). Its function is as follows. Required for the formation of a threonylcarbamoyl group on adenosine at position 37 (t(6)A37) in tRNAs that read codons beginning with adenine. Is involved in the transfer of the threonylcarbamoyl moiety of threonylcarbamoyl-AMP (TC-AMP) to the N6 group of A37, together with TsaE and TsaB. TsaD likely plays a direct catalytic role in this reaction. The chain is tRNA N6-adenosine threonylcarbamoyltransferase from Maridesulfovibrio salexigens (strain ATCC 14822 / DSM 2638 / NCIMB 8403 / VKM B-1763) (Desulfovibrio salexigens).